A 301-amino-acid polypeptide reads, in one-letter code: Nodulation protein D 3 (301 aa).

Residues 6 to 63 enclose the HTH lysR-type domain; it reads LDLNLLVVLDALLTARNLTAAASSINLSQPAMSAAVARLRNYFNDELFTMSGRERVLT. The segment at residues 23-43 is a DNA-binding region (H-T-H motif); the sequence is LTAAASSINLSQPAMSAAVAR.

This sequence belongs to the LysR transcriptional regulatory family.

Its function is as follows. NodD regulates the expression of the nodABCFE genes which encode other nodulation proteins. NodD is also a negative regulator of its own expression. Binds flavonoids as inducers. This is Nodulation protein D 3 (nodD3) from Mesorhizobium japonicum (strain LMG 29417 / CECT 9101 / MAFF 303099) (Mesorhizobium loti (strain MAFF 303099)).